The chain runs to 224 residues: ATP synthase subunit a (224 aa).

Helical transmembrane passes span 17–37, 78–98, 104–124, 136–156, 176–196, and 201–221; these read FIYMTHMLLAAGIALMLVKMA, LVATIGLFVGIANLIGVVPGF, FLEFAFTLALSVFIYYNYEGI, FLGPVWWLYWLMFPIEIVSHF, FLMVILMLAPWVLPMIPYALL, and FLQAFIFMMLTYVYLGSAIAV.

The protein belongs to the ATPase A chain family. F-type ATPases have 2 components, CF(1) - the catalytic core - and CF(0) - the membrane proton channel. CF(1) has five subunits: alpha(3), beta(3), gamma(1), delta(1), epsilon(1). CF(0) has three main subunits: a(1), b(2) and c(9-12). The alpha and beta chains form an alternating ring which encloses part of the gamma chain. CF(1) is attached to CF(0) by a central stalk formed by the gamma and epsilon chains, while a peripheral stalk is formed by the delta and b chains.

It is found in the cell inner membrane. In terms of biological role, key component of the proton channel; it plays a direct role in the translocation of protons across the membrane. The protein is ATP synthase subunit a of Sulfurimonas denitrificans (strain ATCC 33889 / DSM 1251) (Thiomicrospira denitrificans (strain ATCC 33889 / DSM 1251)).